The chain runs to 594 residues: Probable ABC transporter-binding protein DR_1571 (594 aa).

The N-terminal stretch at 1–18 (MKKVMMLALALGASTSLA) is a signal peptide.

It belongs to the bacterial solute-binding protein 5 family.

Functionally, probably part of a binding-protein-dependent transport system. The protein is Probable ABC transporter-binding protein DR_1571 of Deinococcus radiodurans (strain ATCC 13939 / DSM 20539 / JCM 16871 / CCUG 27074 / LMG 4051 / NBRC 15346 / NCIMB 9279 / VKM B-1422 / R1).